Consider the following 250-residue polypeptide: Ubiquinone/menaquinone biosynthesis C-methyltransferase UbiE (250 aa).

Residues Thr-73, Asp-94, 122-123 (NA), and Ser-139 contribute to the S-adenosyl-L-methionine site.

The protein belongs to the class I-like SAM-binding methyltransferase superfamily. MenG/UbiE family.

The catalysed reaction is a 2-demethylmenaquinol + S-adenosyl-L-methionine = a menaquinol + S-adenosyl-L-homocysteine + H(+). The enzyme catalyses a 2-methoxy-6-(all-trans-polyprenyl)benzene-1,4-diol + S-adenosyl-L-methionine = a 5-methoxy-2-methyl-3-(all-trans-polyprenyl)benzene-1,4-diol + S-adenosyl-L-homocysteine + H(+). Its pathway is quinol/quinone metabolism; menaquinone biosynthesis; menaquinol from 1,4-dihydroxy-2-naphthoate: step 2/2. It participates in cofactor biosynthesis; ubiquinone biosynthesis. Methyltransferase required for the conversion of demethylmenaquinol (DMKH2) to menaquinol (MKH2) and the conversion of 2-polyprenyl-6-methoxy-1,4-benzoquinol (DDMQH2) to 2-polyprenyl-3-methyl-6-methoxy-1,4-benzoquinol (DMQH2). The polypeptide is Ubiquinone/menaquinone biosynthesis C-methyltransferase UbiE (Francisella tularensis subsp. tularensis (strain FSC 198)).